The primary structure comprises 199 residues: MSENVIKETENKKNSRGRNWTFVLYPESAKAEWLEYLKELHIQFVVSPLHDRDTDTEGRMKKEHYHILVMYEGNKSYEQIKIITEELNATIPQIAGSVKGLVRYMLHMDDPNKFKYQKEDMIVYGGVDVDELLKKTTTDRYKLIKEMIEFIDEQGIVEFKSLMDYAMKFKFDDWFPLLCDNSAYVIQEYIKSNRYKSDR.

This sequence belongs to the Gram-positive plasmids replication protein type 2 family.

In terms of biological role, is essential for plasmid replication. Nicks the positive strand at the plus origin of replication. The chain is Replication protein (repF) from Staphylococcus aureus.